Consider the following 230-residue polypeptide: Dephospho-CoA kinase (230 aa).

One can recognise a DPCK domain in the interval Leu3 to Arg206. Gly8 to Ser15 is a binding site for ATP.

The protein belongs to the CoaE family.

It carries out the reaction 3'-dephospho-CoA + ATP = ADP + CoA + H(+). It functions in the pathway cofactor biosynthesis; coenzyme A biosynthesis; CoA from (R)-pantothenate: step 5/5. Its function is as follows. Catalyzes the phosphorylation of the 3'-hydroxyl group of dephosphocoenzyme A to form coenzyme A. The sequence is that of Dephospho-CoA kinase from Oryza sativa subsp. japonica (Rice).